A 399-amino-acid polypeptide reads, in one-letter code: Dual-specificity RNA methyltransferase RlmN (399 aa).

The active-site Proton acceptor is the E116. One can recognise a Radical SAM core domain in the interval 122–352; sequence SEDRLTLCIS…VLLRRSMGRD (231 aa). A disulfide bridge connects residues C129 and C357. Residues C136, C140, and C143 each coordinate [4Fe-4S] cluster. S-adenosyl-L-methionine contacts are provided by residues 185-186, S217, 238-240, and N314; these read GE and SLN. C357 acts as the S-methylcysteine intermediate in catalysis.

The protein belongs to the radical SAM superfamily. RlmN family. [4Fe-4S] cluster is required as a cofactor.

It is found in the cytoplasm. It catalyses the reaction adenosine(2503) in 23S rRNA + 2 reduced [2Fe-2S]-[ferredoxin] + 2 S-adenosyl-L-methionine = 2-methyladenosine(2503) in 23S rRNA + 5'-deoxyadenosine + L-methionine + 2 oxidized [2Fe-2S]-[ferredoxin] + S-adenosyl-L-homocysteine. The enzyme catalyses adenosine(37) in tRNA + 2 reduced [2Fe-2S]-[ferredoxin] + 2 S-adenosyl-L-methionine = 2-methyladenosine(37) in tRNA + 5'-deoxyadenosine + L-methionine + 2 oxidized [2Fe-2S]-[ferredoxin] + S-adenosyl-L-homocysteine. Specifically methylates position 2 of adenine 2503 in 23S rRNA and position 2 of adenine 37 in tRNAs. m2A2503 modification seems to play a crucial role in the proofreading step occurring at the peptidyl transferase center and thus would serve to optimize ribosomal fidelity. This Bdellovibrio bacteriovorus (strain ATCC 15356 / DSM 50701 / NCIMB 9529 / HD100) protein is Dual-specificity RNA methyltransferase RlmN.